The primary structure comprises 1371 residues: DNA-directed RNA polymerase subunit beta (1371 aa).

It belongs to the RNA polymerase beta chain family. As to quaternary structure, the RNAP catalytic core consists of 2 alpha, 1 beta, 1 beta' and 1 omega subunit. When a sigma factor is associated with the core the holoenzyme is formed, which can initiate transcription.

The enzyme catalyses RNA(n) + a ribonucleoside 5'-triphosphate = RNA(n+1) + diphosphate. DNA-dependent RNA polymerase catalyzes the transcription of DNA into RNA using the four ribonucleoside triphosphates as substrates. The protein is DNA-directed RNA polymerase subunit beta of Citrifermentans bemidjiense (strain ATCC BAA-1014 / DSM 16622 / JCM 12645 / Bem) (Geobacter bemidjiensis).